We begin with the raw amino-acid sequence, 66 residues long: Large ribosomal subunit protein bL33c (66 aa).

It belongs to the bacterial ribosomal protein bL33 family.

It localises to the plastid. The protein localises to the chloroplast. The sequence is that of Large ribosomal subunit protein bL33c from Daucus carota (Wild carrot).